The chain runs to 330 residues: Low-redox potential peroxidase (330 aa).

A signal peptide spans 1–24 (MRSSTHIFVSFVVYCGVFVTSAIA). An N-linked (GlcNAc...) asparagine glycan is attached at Asn27. 3 cysteine pairs are disulfide-bonded: Cys34–Cys285, Cys54–Cys123, and Cys251–Cys314. Residues Gly69, Asp71, and Ser73 each coordinate Ca(2+). Position 178 (His178) interacts with heme b. Ca(2+) is bound by residues Ser179, Asp196, Thr198, and Asp203.

This sequence belongs to the peroxidase family. Ligninase subfamily. Ca(2+) is required as a cofactor. Requires heme b as cofactor.

It localises to the secreted. It carries out the reaction 2 a phenolic donor + H2O2 = 2 a phenolic radical donor + 2 H2O. Can oxidize the lignin redox mediator veratryl alcohol to veratryl aldehyde. May be involved in oxidation of lignocellulose substrates. This is Low-redox potential peroxidase (LnP) from Taiwanofungus camphoratus (Poroid brown-rot fungus).